Reading from the N-terminus, the 152-residue chain is Large ribosomal subunit protein bL9 (152 aa).

It belongs to the bacterial ribosomal protein bL9 family.

Binds to the 23S rRNA. In Coxiella burnetii (strain RSA 331 / Henzerling II), this protein is Large ribosomal subunit protein bL9.